Here is a 229-residue protein sequence, read N- to C-terminus: MAKKKALIPLLYLASIVFLPWWISLSFTKSLESWVTDWWDTGQSEILLNAIQEKSILKKFIELEELFLLDEMIKEYPETHLEKLRIGIYNETIQLIKMHNEDCIYTILHFSTNIICFVILSSYSILGNEELVILNSWVQEFLYNLSDTIKAFSILLLTDLCIGFHSPHGWELMIGSVYKDFGFAHYEQIISGLVSTFPVILDTILKYWIFRYLNRVSPSLVVIYHSMND.

Transmembrane regions (helical) follow at residues 7 to 27 (LIPLLYLASIVFLPWWISLSF), 114 to 134 (IICFVILSSYSILGNEELVIL), 154 to 174 (ILLLTDLCIGFHSPHGWELMI), and 189 to 209 (IISGLVSTFPVILDTILKYWI).

This sequence belongs to the CemA family.

The protein resides in the plastid. It is found in the chloroplast inner membrane. It carries out the reaction K(+)(in) + H(+)(out) = K(+)(out) + H(+)(in). Functionally, contributes to K(+)/H(+) antiport activity by supporting proton efflux to control proton extrusion and homeostasis in chloroplasts in a light-dependent manner to modulate photosynthesis. Prevents excessive induction of non-photochemical quenching (NPQ) under continuous-light conditions. Indirectly promotes efficient inorganic carbon uptake into chloroplasts. The chain is Potassium/proton antiporter CemA from Fagus sylvatica (Beechnut).